The primary structure comprises 333 residues: Autoinducer 2 import system permease protein LsrC (333 aa).

A run of 9 helical transmembrane segments spans residues 14–34, 39–59, 70–90, 93–113, 115–135, 157–177, 206–226, 252–272, and 284–304; these read LIAILCLFGLLSVIDHQYFSL, LVFSSAQILILLAMGATLVML, IAGLCAVIMGMSLNAGFSLSV, LLTLLLGMCAGFFNGALVTWL, IPAIVTTLGTLGLYRGLMLLL, LNISPIGWLLMILILAMAWIL, IQIIAFSVNGVMAALAGIVFA, GISLLGGTGTVIGAILGAFFL, and LPAWWNDFIAGFVLLAVLIFD.

Belongs to the binding-protein-dependent transport system permease family. AraH/RbsC subfamily. As to quaternary structure, the complex is composed of two ATP-binding proteins (LsrA), two transmembrane proteins (LsrC and LsrD) and a solute-binding protein (LsrB).

Its subcellular location is the cell inner membrane. In terms of biological role, part of the ABC transporter complex LsrABCD involved in autoinducer 2 (AI-2) import. Probably responsible for the translocation of the substrate across the membrane. The chain is Autoinducer 2 import system permease protein LsrC (lsrC) from Photorhabdus laumondii subsp. laumondii (strain DSM 15139 / CIP 105565 / TT01) (Photorhabdus luminescens subsp. laumondii).